The primary structure comprises 222 residues: Probable GTP-binding protein EngB (222 aa).

The 176-residue stretch at 27 to 202 (TGIEVAFAGR…AKKLDEWFLG (176 aa)) folds into the EngB-type G domain. Residues 35 to 42 (GRSNAGKS), 61 to 65 (GRTQL), 81 to 84 (DLPG), 148 to 151 (TKAD), and 181 to 183 (FSS) each bind GTP. Ser-42 and Thr-63 together coordinate Mg(2+).

This sequence belongs to the TRAFAC class TrmE-Era-EngA-EngB-Septin-like GTPase superfamily. EngB GTPase family. The cofactor is Mg(2+).

Necessary for normal cell division and for the maintenance of normal septation. The polypeptide is Probable GTP-binding protein EngB (Pseudoalteromonas translucida (strain TAC 125)).